A 187-amino-acid polypeptide reads, in one-letter code: Peptide methionine sulfoxide reductase A2-1 (187 aa).

This sequence belongs to the MsrA Met sulfoxide reductase family.

Its subcellular location is the cytoplasm. It localises to the cytosol. It carries out the reaction L-methionyl-[protein] + [thioredoxin]-disulfide + H2O = L-methionyl-(S)-S-oxide-[protein] + [thioredoxin]-dithiol. It catalyses the reaction [thioredoxin]-disulfide + L-methionine + H2O = L-methionine (S)-S-oxide + [thioredoxin]-dithiol. Catalyzes the reduction of methionine sulfoxide (MetSO) to methionine in proteins. Plays a protective role against oxidative stress by restoring activity to proteins that have been inactivated by methionine oxidation. MSRA family specifically reduces the MetSO S-enantiomer. The sequence is that of Peptide methionine sulfoxide reductase A2-1 (MSRA2-1) from Oryza sativa subsp. japonica (Rice).